A 378-amino-acid chain; its full sequence is MQSAIKSVEYDRPLAAGAACGVGEAWAKVPDALVPDERDALKARIKALLVREKAVLVAHYYVDADLQALADETGGCVADSLEMARFGRDHDAHTLVVAGVRFMGETAKILSPGKRVLMPDLDATCSLDLGCPIDEFSQFCDAHPERTVVVYANTSAAVKARADWMVTSSIGLEIVADLHARGEKIIWAPDRHLGGYIQKKTGADMLMWQGSCLVHDEFKGIELDLLRHEYPDAKILVHPESPEGVVALADVVGSTTQLIDAAVKLDAQRFIVATDLGILHKMRLAAPGKTFIEAPTAGNSATCKSCAHCPWMAMNALSNLADVLERGHNEIFVEAAIAQRARMPIDRMLDFAARHKQRVQASGDLQRDQALFANVGAA.

Iminosuccinate is bound by residues H59 and S80. Residue C125 participates in [4Fe-4S] cluster binding. Iminosuccinate contacts are provided by residues 151-153 (YAN) and S168. C212 is a [4Fe-4S] cluster binding site. Iminosuccinate contacts are provided by residues 238–240 (HPE) and T255. C309 provides a ligand contact to [4Fe-4S] cluster.

This sequence belongs to the quinolinate synthase family. Type 1 subfamily. [4Fe-4S] cluster serves as cofactor.

It localises to the cytoplasm. The enzyme catalyses iminosuccinate + dihydroxyacetone phosphate = quinolinate + phosphate + 2 H2O + H(+). The protein operates within cofactor biosynthesis; NAD(+) biosynthesis; quinolinate from iminoaspartate: step 1/1. Functionally, catalyzes the condensation of iminoaspartate with dihydroxyacetone phosphate to form quinolinate. The polypeptide is Quinolinate synthase (Burkholderia pseudomallei (strain 668)).